We begin with the raw amino-acid sequence, 825 residues long: Tuftelin-interacting protein 11 (825 aa).

The segment at 1–135 is disordered; sequence MSMSHLYGKD…RTFAGGIKSN (135 aa). Acidic residues predominate over residues 11 to 25; that stretch reads EDSDGVEMENFEITD. 2 stretches are compositionally biased toward basic and acidic residues: residues 41-61 and 85-114; these read QTKE…DERP and PAAE…EAKK. A compositionally biased stretch (polar residues) spans 122–135; that stretch reads KPSQRTFAGGIKSN. Residues 145–191 enclose the G-patch domain; that stretch reads TKGIGQKLLQKMGYVQGRGLGKNAQGIIAPIEAKQRKGKGAVGAYGS.

Belongs to the TFP11/STIP family. As to quaternary structure, identified in the spliceosome C complex.

The protein resides in the nucleus. Involved in pre-mRNA splicing, specifically in spliceosome disassembly during late-stage splicing events. This Xenopus tropicalis (Western clawed frog) protein is Tuftelin-interacting protein 11 (tfip11).